The chain runs to 179 residues: Peroxiredoxin (179 aa).

One can recognise a Thioredoxin domain in the interval 2-152; sequence TMEKQVPIVT…VEGWFEEEGF (151 aa). Cysteine 56 acts as the Cysteine sulfenic acid (-SOH) intermediate (for peroxiredoxin activity) in catalysis.

This sequence belongs to the peroxiredoxin family. Prx5 subfamily. Monomer.

The enzyme catalyses a hydroperoxide + 2 glutathione = an alcohol + glutathione disulfide + H2O. Functionally, thiol-specific peroxidase that catalyzes the reduction of hydrogen peroxide and organic hydroperoxides to water and alcohols, respectively. Plays a role in cell protection against oxidative stress by detoxifying peroxides. In Rhizobium etli, this protein is Peroxiredoxin.